The chain runs to 59 residues: Potassium channel toxin alpha-KTx 3.5 (59 aa).

An N-terminal signal peptide occupies residues 1–22 (MKVFSAVLIILFVCSMIIGINA). Intrachain disulfides connect cysteine 29/cysteine 49, cysteine 35/cysteine 54, and cysteine 39/cysteine 56. Residues 47–54 (GKCMNGKC) are interaction with Ca(2+)-activated K(+) channels.

It belongs to the short scorpion toxin superfamily. Potassium channel inhibitor family. Alpha-KTx 03 subfamily. In terms of tissue distribution, expressed by the venom gland.

It localises to the secreted. In terms of biological role, has also been shown to inhibit with high potency Kv1.3/KCNA3 and with low potency Kv1.1/KCNA1 and Kv1.2/KCNA2 voltage-gated potassium channels. Also binds and inhibits the molluscan calcium-activated potassium channels KCa (Kd=135 nM). The protein is Potassium channel toxin alpha-KTx 3.5 (KTX2) of Androctonus australis (Sahara scorpion).